The following is a 457-amino-acid chain: Cell division cycle 20.1, cofactor of APC complex (457 aa).

WD repeat units lie at residues 138–175, 180–219, 223–260, 264–303, 312–354, 356–397, and 400–439; these read VDDF…TSEL, EEKG…QLRT, GHQS…PIVE, GHTQ…SNST, EHTS…CLNS, DTGS…KMAE, and GHTS…ETAK.

This sequence belongs to the WD repeat CDC20/Fizzy family. As to quaternary structure, the APC/C is composed of at least 11 subunits that stay tightly associated throughout the cell cycle. Interacts with APC10, FZR1, FZR2, FZR3. Binds to GIG1 and PYM. Part of the mitotic checkpoint complex (MCC); interacts with MAD2, BUB3.1, BUBR1 and BUB1. Binds to cyclins CYCA1-2, CYCB2-1 and CYCB2-2. Interacts with PANS1. In terms of tissue distribution, expressed in meristems and organ primordia. Present in flowers, leaves, stems, roots, pollen grains and developing seeds.

The protein localises to the nucleus. The protein operates within protein modification; protein ubiquitination. In terms of biological role, component of the anaphase promoting complex/cyclosome (APC/C), a cell cycle-regulated E3 ubiquitin-protein ligase complex that controls progression through mitosis and the G1 phase of the cell cycle. This Arabidopsis thaliana (Mouse-ear cress) protein is Cell division cycle 20.1, cofactor of APC complex (CDC20-1).